The chain runs to 611 residues: Chloroplast sensor kinase, chloroplastic (611 aa).

The transit peptide at 1–79 directs the protein to the chloroplast; sequence MLLSAIASQT…PGGGETMVAS (79 aa). Residues 17–50 are disordered; sequence NLHFSNSIPNPRPSNPSLKLLNASSSSSSSSSSS. Low complexity predominate over residues 40–50; that stretch reads SSSSSSSSSSS. The tract at residues 116 to 300 is GAF; sequence DFQRLCLEQL…VMDQKTMLLQ (185 aa). Residue Cys121 coordinates [3Fe-4S] cluster. Ser188 is subject to Phosphoserine. In terms of domain architecture, Histidine kinase spans 312–602; that stretch reads KLVEQIRGPL…RVELWLPAFP (291 aa). Residues 345 to 380 adopt a coiled-coil conformation; sequence VEDLIVQGDQIKDTLEELQDAVHLTKANIVRHNEEA. Positions 385-402 are enriched in basic and acidic residues; it reads NKTHNETRRSKYEHKDPI. The disordered stretch occupies residues 385–420; the sequence is NKTHNETRRSKYEHKDPIDGSQISSTRLSLGSGLDD.

Belongs to the chloroplast sensor kinase protein family. As to quaternary structure, self-interacts. Interacts with the plastoquinone analog 2,5-dibromo-3-methyl-5-isopropyl-p-benzoquinone (DBMIB) and with SIGA/SIG1. It depends on [3Fe-4S] cluster as a cofactor. Autophosphorylated, possibly on tyrosine residues, in photosystem I (PS I) light and in the presence of manganese ions Mn(2+), to a lesser degree, in the presence of calcium ions Ca(2+), but not in the presence of magnesium ions Mg(2+). Dithiothreitol (DTT) stimulates autophosphorylation. Phosphorylated on Ser-188 in vivo after exposure to far-red light (when plastoquinone (PQ) is oxidized). Not phosphorylated under orange light (reduces PQ).

It localises to the plastid. Its subcellular location is the chloroplast stroma. It catalyses the reaction L-tyrosyl-[protein] + ATP = O-phospho-L-tyrosyl-[protein] + ADP + H(+). In terms of biological role, sensor kinase that senses the plastoquinone (PQ) redox state involved in stoichiometry adjustment of both photosystems (e.g. long-term adaptation via transcriptional regulation of reaction center genes of photosystems I and II) and state transitions (e.g. short-term adaptation involving reversible post-translational phosphorylation of light-harvesting complex II, LHC II), thus linking photosynthesis with gene expression in chloroplasts. Autophosphorylates, probably on a tyrosine residue. Probably phosphorylates SIGA/SIG1 in response to plastoquinone redox state modification. Reduced PQ suppresses its autophosphorylation activity. Represses expression of a number of chloroplast-encoded genes. This is Chloroplast sensor kinase, chloroplastic from Arabidopsis thaliana (Mouse-ear cress).